We begin with the raw amino-acid sequence, 544 residues long: O-phosphoserine--tRNA(Cys) ligase (544 aa).

Residues 194 to 196 (HMT), 239 to 241 (SAS), 281 to 282 (YY), and N335 each bind substrate.

Belongs to the class-II aminoacyl-tRNA synthetase family. O-phosphoseryl-tRNA(Cys) synthetase subfamily. In terms of assembly, homotetramer. Interacts with SepCysS.

It carries out the reaction tRNA(Cys) + O-phospho-L-serine + ATP = O-phospho-L-seryl-tRNA(Cys) + AMP + diphosphate. Functionally, catalyzes the attachment of O-phosphoserine (Sep) to tRNA(Cys). This is O-phosphoserine--tRNA(Cys) ligase from Methanopyrus kandleri (strain AV19 / DSM 6324 / JCM 9639 / NBRC 100938).